Reading from the N-terminus, the 234-residue chain is Glucosamine-6-phosphate deaminase (234 aa).

The active-site Proton acceptor; for enolization step is D62. Residue N128 is the For ring-opening step of the active site. Catalysis depends on H130, which acts as the Proton acceptor; for ring-opening step. Catalysis depends on E135, which acts as the For ring-opening step.

It belongs to the glucosamine/galactosamine-6-phosphate isomerase family. NagB subfamily.

The catalysed reaction is alpha-D-glucosamine 6-phosphate + H2O = beta-D-fructose 6-phosphate + NH4(+). It functions in the pathway amino-sugar metabolism; N-acetylneuraminate degradation; D-fructose 6-phosphate from N-acetylneuraminate: step 5/5. In terms of biological role, catalyzes the reversible isomerization-deamination of glucosamine 6-phosphate (GlcN6P) to form fructose 6-phosphate (Fru6P) and ammonium ion. The polypeptide is Glucosamine-6-phosphate deaminase (Lactobacillus delbrueckii subsp. bulgaricus (strain ATCC 11842 / DSM 20081 / BCRC 10696 / JCM 1002 / NBRC 13953 / NCIMB 11778 / NCTC 12712 / WDCM 00102 / Lb 14)).